The following is a 213-amino-acid chain: Protein-L-isoaspartate O-methyltransferase (213 aa).

S62 is a catalytic residue.

Belongs to the methyltransferase superfamily. L-isoaspartyl/D-aspartyl protein methyltransferase family.

The protein resides in the cytoplasm. The catalysed reaction is [protein]-L-isoaspartate + S-adenosyl-L-methionine = [protein]-L-isoaspartate alpha-methyl ester + S-adenosyl-L-homocysteine. Its function is as follows. Catalyzes the methyl esterification of L-isoaspartyl residues in peptides and proteins that result from spontaneous decomposition of normal L-aspartyl and L-asparaginyl residues. It plays a role in the repair and/or degradation of damaged proteins. This chain is Protein-L-isoaspartate O-methyltransferase, found in Idiomarina loihiensis (strain ATCC BAA-735 / DSM 15497 / L2-TR).